The following is a 97-amino-acid chain: UPF0250 protein RSc0326 (97 aa).

It belongs to the UPF0250 family.

This Ralstonia nicotianae (strain ATCC BAA-1114 / GMI1000) (Ralstonia solanacearum) protein is UPF0250 protein RSc0326.